The chain runs to 160 residues: Large ribosomal subunit protein uL16 (160 aa).

Positions 138–160 (INLSSDSSGEGKTGKDSKEEVKK) are disordered. Over residues 149–160 (KTGKDSKEEVKK) the composition is skewed to basic and acidic residues.

Belongs to the universal ribosomal protein uL16 family. In terms of assembly, part of the 50S ribosomal subunit.

Functionally, binds 23S rRNA and is also seen to make contacts with the A and possibly P site tRNAs. This Prochlorococcus marinus subsp. pastoris (strain CCMP1986 / NIES-2087 / MED4) protein is Large ribosomal subunit protein uL16.